A 474-amino-acid polypeptide reads, in one-letter code: uncharacterized protein (474 aa).

The segment covering 1 to 11 (MGGSDFEDDEL) has biased composition (acidic residues). Positions 1–163 (MGGSDFEDDE…ETSPFNREDG (163 aa)) are disordered. Residues 12–25 (FKDLYGEENEKKVE) show a composition bias toward basic and acidic residues. The span at 27–39 (ASGNQETSNVTPT) shows a compositional bias: polar residues. Over residues 40 to 76 (KENEGYEELEKSGEAGAERTKENPFREEPGADFDRSG) the composition is skewed to basic and acidic residues. Residues 129–140 (NDNYNENQSALT) show a composition bias toward polar residues. 2 RRM domains span residues 163-245 (GKMF…EQEK) and 247-324 (AKMF…RATP). The interval 412 to 474 (DPSKMNQGTG…GGHSFHPYRR (63 aa)) is disordered. Residues 425-434 (PFSPSMPSGS) show a composition bias toward low complexity. Positions 435-444 (SRGGYHGRNP) are enriched in gly residues.

The protein localises to the nucleus. This is an uncharacterized protein from Schizosaccharomyces pombe (strain 972 / ATCC 24843) (Fission yeast).